The chain runs to 267 residues: Proteasome assembly chaperone 2 (267 aa).

It belongs to the PSMG2 family. In terms of assembly, component of the 20S proteasome chaperone. Forms a heterodimer with PBA1 that binds to proteasome precursors.

It localises to the cytoplasm. Its function is as follows. Involved in 20S proteasome assembly. Required for maximal proteasome activity. Affects the chymotrypsin-like activity of the proteasome. Can be degraded by the proteasome. Involved in the endoplasmic reticulum-associated degradation (ERAD). The polypeptide is Proteasome assembly chaperone 2 (ADD66) (Saccharomyces cerevisiae (strain ATCC 204508 / S288c) (Baker's yeast)).